We begin with the raw amino-acid sequence, 410 residues long: Angiopoietin-related protein 4 (410 aa).

A signal peptide spans 1–23 (MRCAPTAGAALVLCAATAGLLSA). Residues 79-101 (ACQGPKGKDAPFKDSEDRVPEGQ) are disordered. The segment covering 84 to 98 (KGKDAPFKDSEDRVP) has biased composition (basic and acidic residues). Residues 104–152 (ETLQSLQTQLKAQNSKIQQLFQKVAQQQRYLSKQNLRIQNLQSQIDLLA) are a coiled coil. Residue N181 is glycosylated (N-linked (GlcNAc...) asparagine). The 223-residue stretch at 183–405 (THLHRPPRDC…ATTLLIQPME (223 aa)) folds into the Fibrinogen C-terminal domain. A disulfide bridge links C192 with C220. N236 and N242 each carry an N-linked (GlcNAc...) asparagine glycan. Cysteines 345 and 358 form a disulfide.

As to quaternary structure, homooligomer; disulfide-linked via Cys residues in the N-terminal part of the protein. The homooligomer undergoes proteolytic processing to release the ANGPTL4 C-terminal chain, which circulates as a monomer. The homooligomer unprocessed form is able to interact with the extracellular matrix. In terms of processing, N-glycosylated. Post-translationally, forms disulfide-linked dimers and tetramers. Cleaved into a smaller N-terminal chain and a larger chain that contains the fibrinogen C-terminal domain; both cleaved and uncleaved forms are detected in the extracellular space. The cleaved form is not present within the cell. As to expression, detected in liver and kidney. Predominantly expressed in adipose tissue and is strongly up-regulated by fasting in white adipose tissue and liver. More abundant in areas of lower flow stress in the inner curvature compared to the outer curvature regions of the aorta (at protein level).

Its subcellular location is the secreted. It is found in the extracellular space. The protein resides in the extracellular matrix. Mediates inactivation of the lipoprotein lipase LPL, and thereby plays a role in the regulation of triglyceride clearance from the blood serum and in lipid metabolism. May also play a role in regulating glucose homeostasis and insulin sensitivity. Inhibits proliferation, migration, and tubule formation of endothelial cells and reduces vascular leakage. Upon heterologous expression, inhibits the adhesion of endothelial cell to the extracellular matrix (ECM), and inhibits the reorganization of the actin cytoskeleton, formation of actin stress fibers and focal adhesions in endothelial cells that have adhered to ANGPTL4-containing ECM (in vitro). Depending on context, may modulate tumor-related angiogenesis. Its function is as follows. Mediates inactivation of the lipoprotein lipase LPL, and thereby plays an important role in the regulation of triglyceride clearance from the blood serum and in lipid metabolism. Has higher activity in LPL inactivation than the uncleaved protein. This is Angiopoietin-related protein 4 (Angptl4) from Mus musculus (Mouse).